We begin with the raw amino-acid sequence, 181 residues long: Inner membrane-spanning protein YciB (181 aa).

5 helical membrane passes run 22–42 (IYTA…LTYV), 50–70 (MQLI…FLHD), 80–100 (IVYA…RPII), 118–138 (INYA…YVAF), and 148–168 (FKVF…GMYV).

It belongs to the YciB family.

The protein localises to the cell inner membrane. Functionally, plays a role in cell envelope biogenesis, maintenance of cell envelope integrity and membrane homeostasis. This chain is Inner membrane-spanning protein YciB, found in Aliivibrio salmonicida (strain LFI1238) (Vibrio salmonicida (strain LFI1238)).